Reading from the N-terminus, the 340-residue chain is Thylakoidal processing peptidase 1, chloroplastic (340 aa).

The N-terminal 52 residues, 1 to 52 (MAIRITFTYSTHVARNLVGTRVGPGGYCFESLVRPRFFSHKRDFDRSPRNRP), are a transit peptide targeting the chloroplast. Residues 155 to 175 (EDAKAAFTAVTVSILFRSALA) traverse the membrane as a helical segment. The Lumenal, thylakoid portion of the chain corresponds to 176–340 (EPKSIPSTSM…AITRGPVAVS (165 aa)). Ser184 is an active-site residue.

The protein belongs to the peptidase S26 family.

It is found in the plastid. The protein resides in the chloroplast thylakoid membrane. The catalysed reaction is Cleavage of hydrophobic, N-terminal signal or leader sequences from secreted and periplasmic proteins.. Cleaves the thylakoid-transfer domain from a chloroplast protein. This is Thylakoidal processing peptidase 1, chloroplastic (TPP1) from Arabidopsis thaliana (Mouse-ear cress).